The following is a 469-amino-acid chain: MTTKTRFAPSPTGFLHVGGARTALYSWLQARANNGEFVLRIEDTDIERSTQAACDAILEGMNWLGLTWDEGPYYQTKRFDRYNEIIAQMLAKGTAYKCYCSRERIDALREAQAANGEAQKYDGCCRDLPARDTDEPFVVRFKNPIGGSVVFDDHVRGRIEFSNDALDDLIIARTDGVPTYNFCVVVDDWDMGITCVVRGEDHINNTPRQINILKALGAPIPEYAHVSMILGDDGAKLSKRHGAVSVMQYRDDGYLPEALLNYLVRLGWSHGDQEIFSLEEMKQYFKLGDINKAASAFNTDKLVWLNQHYIKSLAPEYVATHLQWHMDDQKIDLSNGPALAEVVTALAERAKTLKELAASSRYFYEDFAEFDEAQAKKHLRGVALEPLQLVQQKLAALTEWTVEAIHQAIEDTATELDVGMGKVGMPLRVAVTGAGQSPGLDITLFLIGRSRSEQRISKAIEFVADRINS.

The 'HIGH' region signature appears at 9-19 (PSPTGFLHVGG). Residues Cys-98, Cys-100, Cys-125, and Asp-127 each coordinate Zn(2+). The 'KMSKS' region motif lies at 236-240 (KLSKR). Lys-239 is an ATP binding site.

The protein belongs to the class-I aminoacyl-tRNA synthetase family. Glutamate--tRNA ligase type 1 subfamily. In terms of assembly, monomer. Zn(2+) serves as cofactor.

The protein localises to the cytoplasm. It catalyses the reaction tRNA(Glu) + L-glutamate + ATP = L-glutamyl-tRNA(Glu) + AMP + diphosphate. In terms of biological role, catalyzes the attachment of glutamate to tRNA(Glu) in a two-step reaction: glutamate is first activated by ATP to form Glu-AMP and then transferred to the acceptor end of tRNA(Glu). This Shewanella baltica (strain OS185) protein is Glutamate--tRNA ligase.